The sequence spans 126 residues: Holo-[acyl-carrier-protein] synthase (126 aa).

2 residues coordinate Mg(2+): Asp-9 and Glu-58.

Belongs to the P-Pant transferase superfamily. AcpS family. The cofactor is Mg(2+).

It is found in the cytoplasm. It carries out the reaction apo-[ACP] + CoA = holo-[ACP] + adenosine 3',5'-bisphosphate + H(+). Functionally, transfers the 4'-phosphopantetheine moiety from coenzyme A to a Ser of acyl-carrier-protein. The chain is Holo-[acyl-carrier-protein] synthase from Buchnera aphidicola subsp. Acyrthosiphon pisum (strain APS) (Acyrthosiphon pisum symbiotic bacterium).